Reading from the N-terminus, the 231-residue chain is Glycerol-3-phosphate acyltransferase (231 aa).

6 helical membrane passes run 6–26 (FLFL…LVIG), 55–75 (WGIL…TIFL), 95–115 (LTMK…FSLF), 130–150 (IITS…AIFL), 152–172 (LFGY…IFLW), and 196–216 (LFYF…YSNI).

It belongs to the PlsY family. As to quaternary structure, probably interacts with PlsX.

It localises to the cell membrane. It catalyses the reaction an acyl phosphate + sn-glycerol 3-phosphate = a 1-acyl-sn-glycero-3-phosphate + phosphate. Its pathway is lipid metabolism; phospholipid metabolism. Catalyzes the transfer of an acyl group from acyl-phosphate (acyl-PO(4)) to glycerol-3-phosphate (G3P) to form lysophosphatidic acid (LPA). This enzyme utilizes acyl-phosphate as fatty acyl donor, but not acyl-CoA or acyl-ACP. The polypeptide is Glycerol-3-phosphate acyltransferase (Aster yellows witches'-broom phytoplasma (strain AYWB)).